The following is a 244-amino-acid chain: Ubiquinone/menaquinone biosynthesis C-methyltransferase UbiE (244 aa).

Residues threonine 70, aspartate 91, and 117-118 contribute to the S-adenosyl-L-methionine site; that span reads DA.

Belongs to the class I-like SAM-binding methyltransferase superfamily. MenG/UbiE family.

It catalyses the reaction a 2-demethylmenaquinol + S-adenosyl-L-methionine = a menaquinol + S-adenosyl-L-homocysteine + H(+). It carries out the reaction a 2-methoxy-6-(all-trans-polyprenyl)benzene-1,4-diol + S-adenosyl-L-methionine = a 5-methoxy-2-methyl-3-(all-trans-polyprenyl)benzene-1,4-diol + S-adenosyl-L-homocysteine + H(+). It participates in quinol/quinone metabolism; menaquinone biosynthesis; menaquinol from 1,4-dihydroxy-2-naphthoate: step 2/2. It functions in the pathway cofactor biosynthesis; ubiquinone biosynthesis. Functionally, methyltransferase required for the conversion of demethylmenaquinol (DMKH2) to menaquinol (MKH2) and the conversion of 2-polyprenyl-6-methoxy-1,4-benzoquinol (DDMQH2) to 2-polyprenyl-3-methyl-6-methoxy-1,4-benzoquinol (DMQH2). This chain is Ubiquinone/menaquinone biosynthesis C-methyltransferase UbiE, found in Chromobacterium violaceum (strain ATCC 12472 / DSM 30191 / JCM 1249 / CCUG 213 / NBRC 12614 / NCIMB 9131 / NCTC 9757 / MK).